Reading from the N-terminus, the 224-residue chain is PKHD-type hydroxylase Shewana3_0717 (224 aa).

Residues 78–176 (QFYPPLFNRY…RTAAFMWLQS (99 aa)) form the Fe2OG dioxygenase domain. 3 residues coordinate Fe cation: His-96, Asp-98, and His-157. Residue Arg-167 coordinates 2-oxoglutarate.

Requires Fe(2+) as cofactor. L-ascorbate is required as a cofactor.

This chain is PKHD-type hydroxylase Shewana3_0717, found in Shewanella sp. (strain ANA-3).